Consider the following 646-residue polypeptide: Protein SENSITIVE TO UV 2 (646 aa).

The tract at residues 42–70 (PAPPPSTKISSSLSHPMQLQSSAGQQRKQ) is disordered. Over residues 48 to 70 (TKISSSLSHPMQLQSSAGQQRKQ) the composition is skewed to polar residues. Positions 119 to 126 (NRRCDSEK) match the Nuclear localization signal motif. A coiled-coil region spans residues 123–157 (DSEKDLEIDRLKKELERVSKQLLDVEQECSQLKKG). One can recognise a Phosphatase tensin-type domain in the interval 376–646 (KRTEQDVKQE…VFAFLGDNTI (271 aa)).

This sequence belongs to the serpin family. As to quaternary structure, forms multimers through the coiled-coil domain. Post-translationally, probably phosphorylated by ATR. Accumulates throughout the root tip.

Its subcellular location is the nucleus. It localises to the cytoplasm. Functionally, required for tolerance to DNA-damaging and cross-linking agents such as UVB irradiation, gamma-radiation, aphidicolin, ionizing radiation and hydroxyurea (HU), cisplatin (CDDP) and mitomycin C (MMC). Involved in cell-cycle G2/M arrest in response to DNA damage. Required for aluminum-dependent gene regulation and root growth inhibition in an ATR-dependent manner by halting cell cycle progression and triggering loss of the quiescent center (QC). In Arabidopsis thaliana (Mouse-ear cress), this protein is Protein SENSITIVE TO UV 2.